Consider the following 398-residue polypeptide: Probable aminomethyltransferase (398 aa).

The protein belongs to the GcvT family. In terms of assembly, the glycine cleavage system is composed of four proteins: P, T, L and H.

The catalysed reaction is N(6)-[(R)-S(8)-aminomethyldihydrolipoyl]-L-lysyl-[protein] + (6S)-5,6,7,8-tetrahydrofolate = N(6)-[(R)-dihydrolipoyl]-L-lysyl-[protein] + (6R)-5,10-methylene-5,6,7,8-tetrahydrofolate + NH4(+). The glycine cleavage system catalyzes the degradation of glycine. In Pyrococcus furiosus (strain ATCC 43587 / DSM 3638 / JCM 8422 / Vc1), this protein is Probable aminomethyltransferase.